We begin with the raw amino-acid sequence, 209 residues long: Large ribosomal subunit protein uL3 (209 aa).

The disordered stretch occupies residues 126-165 (HNFGGGSRTHGQSDRLRAPGSVGGSSDPSRTFRGTRMAGR).

The protein belongs to the universal ribosomal protein uL3 family. Part of the 50S ribosomal subunit. Forms a cluster with proteins L14 and L19.

Functionally, one of the primary rRNA binding proteins, it binds directly near the 3'-end of the 23S rRNA, where it nucleates assembly of the 50S subunit. The protein is Large ribosomal subunit protein uL3 of Chlorobium limicola (strain DSM 245 / NBRC 103803 / 6330).